The chain runs to 545 residues: Glucose-6-phosphate isomerase (545 aa).

Glu351 functions as the Proton donor in the catalytic mechanism. Residues His382 and Lys510 contribute to the active site.

The protein belongs to the GPI family.

The protein resides in the cytoplasm. It carries out the reaction alpha-D-glucose 6-phosphate = beta-D-fructose 6-phosphate. Its pathway is carbohydrate biosynthesis; gluconeogenesis. It functions in the pathway carbohydrate degradation; glycolysis; D-glyceraldehyde 3-phosphate and glycerone phosphate from D-glucose: step 2/4. Functionally, catalyzes the reversible isomerization of glucose-6-phosphate to fructose-6-phosphate. The polypeptide is Glucose-6-phosphate isomerase (Shewanella pealeana (strain ATCC 700345 / ANG-SQ1)).